Reading from the N-terminus, the 327-residue chain is tRNA dimethylallyltransferase (327 aa).

14–21 (GPTASGKT) provides a ligand contact to ATP. 16-21 (TASGKT) provides a ligand contact to substrate. Interaction with substrate tRNA regions lie at residues 39-42 (DSAL) and 163-167 (QRIQR).

This sequence belongs to the IPP transferase family. In terms of assembly, monomer. Mg(2+) serves as cofactor.

The catalysed reaction is adenosine(37) in tRNA + dimethylallyl diphosphate = N(6)-dimethylallyladenosine(37) in tRNA + diphosphate. Functionally, catalyzes the transfer of a dimethylallyl group onto the adenine at position 37 in tRNAs that read codons beginning with uridine, leading to the formation of N6-(dimethylallyl)adenosine (i(6)A). The chain is tRNA dimethylallyltransferase from Xanthomonas axonopodis pv. citri (strain 306).